The following is a 274-amino-acid chain: Tryptophan synthase alpha chain (274 aa).

Residues glutamate 49 and aspartate 60 each act as proton acceptor in the active site.

The protein belongs to the TrpA family. Tetramer of two alpha and two beta chains.

It carries out the reaction (1S,2R)-1-C-(indol-3-yl)glycerol 3-phosphate + L-serine = D-glyceraldehyde 3-phosphate + L-tryptophan + H2O. It functions in the pathway amino-acid biosynthesis; L-tryptophan biosynthesis; L-tryptophan from chorismate: step 5/5. Functionally, the alpha subunit is responsible for the aldol cleavage of indoleglycerol phosphate to indole and glyceraldehyde 3-phosphate. This chain is Tryptophan synthase alpha chain, found in Zymomonas mobilis subsp. mobilis (strain ATCC 31821 / ZM4 / CP4).